A 71-amino-acid chain; its full sequence is Large ribosomal subunit protein bL31 (71 aa).

Residues Cys-16, Cys-18, Cys-37, and Cys-40 each coordinate Zn(2+).

The protein belongs to the bacterial ribosomal protein bL31 family. Type A subfamily. As to quaternary structure, part of the 50S ribosomal subunit. It depends on Zn(2+) as a cofactor.

Functionally, binds the 23S rRNA. This chain is Large ribosomal subunit protein bL31, found in Marinomonas sp. (strain MWYL1).